We begin with the raw amino-acid sequence, 124 residues long: Large ribosomal subunit protein bL12 (124 aa).

Belongs to the bacterial ribosomal protein bL12 family. As to quaternary structure, homodimer. Part of the ribosomal stalk of the 50S ribosomal subunit. Forms a multimeric L10(L12)X complex, where L10 forms an elongated spine to which 2 to 4 L12 dimers bind in a sequential fashion. Binds GTP-bound translation factors.

Forms part of the ribosomal stalk which helps the ribosome interact with GTP-bound translation factors. Is thus essential for accurate translation. This chain is Large ribosomal subunit protein bL12, found in Burkholderia ambifaria (strain MC40-6).